The sequence spans 255 residues: tRNA uridine(34) hydroxylase (255 aa).

The Rhodanese domain occupies 131–225 (AAPDTLVLDT…YLEEVPEAQS (95 aa)). Cys185 acts as the Cysteine persulfide intermediate in catalysis.

This sequence belongs to the TrhO family.

It catalyses the reaction uridine(34) in tRNA + AH2 + O2 = 5-hydroxyuridine(34) in tRNA + A + H2O. Catalyzes oxygen-dependent 5-hydroxyuridine (ho5U) modification at position 34 in tRNAs. This is tRNA uridine(34) hydroxylase from Bradyrhizobium diazoefficiens (strain JCM 10833 / BCRC 13528 / IAM 13628 / NBRC 14792 / USDA 110).